Reading from the N-terminus, the 499-residue chain is Putative antiporter subunit mnhD2 (499 aa).

Transmembrane regions (helical) follow at residues 3–23 (LSNLLILPMLLPFLCALILVF), 33–53 (YLYLGTMTITTIISLMLLIYV), 79–99 (LSLIMVTTASFVITLIMAYGF), 109–129 (YHLPSFILFLSVGVIGSFLTS), 131–151 (LFNLYVMFEIMLLASFVLITL), 162–182 (IIYVVLNIIGSWLFLLGIGLL), 210–230 (ISLIFLVAFSAKAALVLFMWL), 241–261 (LAALFAALMTKVGAYALIRFF), 272–292 (IHPLLATMAAITMVIGAIGVI), 309–329 (IGFIILGLGTNTFAGINGAIF), 331–351 (LVNDIVVKTLLFFIIGSLVYI), 370–390 (FGVAFIIMIFAIGGVPPFSGF), 404–424 (GNYIGLALMIITSLIAMYSLF), and 452–472 (ILSILVVVVIAIGIAAPVVLN).

The protein belongs to the CPA3 antiporters (TC 2.A.63) subunit D family. In terms of assembly, may form a heterooligomeric complex that consists of seven subunits: mnhA2, mnhB2, mnhC2, mnhD2, mnhE2, mnhF2 and mnhG2.

The protein localises to the cell membrane. In terms of biological role, expression of the mnh2 operon in E.coli is not able to catalyze Na(+)Li(+)/H(+) antiport. It does however confer higher growth rates than the control strain at up to pH 9.5. The operon may encode an NADH-ubiquinone oxidoreductase. The polypeptide is Putative antiporter subunit mnhD2 (mnhD2) (Staphylococcus aureus).